Here is a 333-residue protein sequence, read N- to C-terminus: Protein-methionine-sulfoxide reductase catalytic subunit MsrP (333 aa).

Positions 1 to 43 form a signal peptide, tat-type signal; it reads MHKHRKPTEADVTPESLFYQRRRVLKALGISAAALSLPLSAQA. Mo-molybdopterin-binding positions include Asn87, 90-91, Cys145, Thr180, Asn232, Arg237, and 248-250; these read YE and NIK.

This sequence belongs to the MsrP family. Heterodimer of a catalytic subunit (MsrP) and a heme-binding subunit (MsrQ). It depends on Mo-molybdopterin as a cofactor. Predicted to be exported by the Tat system. The position of the signal peptide cleavage has not been experimentally proven.

Its subcellular location is the periplasm. It catalyses the reaction L-methionyl-[protein] + a quinone + H2O = L-methionyl-(S)-S-oxide-[protein] + a quinol. It carries out the reaction L-methionyl-[protein] + a quinone + H2O = L-methionyl-(R)-S-oxide-[protein] + a quinol. In terms of biological role, part of the MsrPQ system that repairs oxidized periplasmic proteins containing methionine sulfoxide residues (Met-O), using respiratory chain electrons. Thus protects these proteins from oxidative-stress damage caused by reactive species of oxygen and chlorine generated by the host defense mechanisms. MsrPQ is essential for the maintenance of envelope integrity under bleach stress, rescuing a wide series of structurally unrelated periplasmic proteins from methionine oxidation. The catalytic subunit MsrP is non-stereospecific, being able to reduce both (R-) and (S-) diastereoisomers of methionine sulfoxide. The protein is Protein-methionine-sulfoxide reductase catalytic subunit MsrP of Pectobacterium atrosepticum (strain SCRI 1043 / ATCC BAA-672) (Erwinia carotovora subsp. atroseptica).